The primary structure comprises 355 residues: Beta-porphyranase C (355 aa).

Residues 1-18 (MIKTLKRIPLVFLIAIMA) form the signal peptide. C19 carries N-palmitoyl cysteine lipidation. A lipid anchor (S-diacylglycerol cysteine) is attached at C19. The tract at residues 22-72 (SGDNGKDKVEEQEQAQEQGEKKGQGEERDKEDGIDGLQPTFLADQDPKPDD) is disordered. Residues 39 to 54 (QGEKKGQGEERDKEDG) are compositionally biased toward basic and acidic residues. Positions 71–355 (DDKKWIKVEG…WVRVWQLEDL (285 aa)) constitute a GH16 domain. The substrate site is built by W110, E208, and E213. The Nucleophile role is filled by E208. The active-site Proton donor is E213.

The protein belongs to the glycosyl hydrolase 16 family.

Its subcellular location is the cell outer membrane. It carries out the reaction Hydrolysis of beta-D-galactopyranose-(1-&gt;4)-alpha-L-galactopyranose-6-sulfate linkages in porphyran.. Cleaves the sulfated polysaccharide porphyran at the (1-&gt;4) linkages between beta-D-galactopyranose and alpha-L-galactopyranose-6-sulfate, forming mostly the disaccharide alpha-L-galactopyranose-6-sulfate-(1-&gt;3)-beta-D-galactose. The sequence is that of Beta-porphyranase C (porC) from Zobellia galactanivorans (strain DSM 12802 / CCUG 47099 / CIP 106680 / NCIMB 13871 / Dsij).